The primary structure comprises 413 residues: Serine hydroxymethyltransferase (413 aa).

(6S)-5,6,7,8-tetrahydrofolate is bound by residues leucine 119 and 123–125 (GHL). The residue at position 228 (lysine 228) is an N6-(pyridoxal phosphate)lysine. (6S)-5,6,7,8-tetrahydrofolate is bound at residue 351–353 (SPF).

Belongs to the SHMT family. As to quaternary structure, homodimer. The cofactor is pyridoxal 5'-phosphate.

It localises to the cytoplasm. It catalyses the reaction (6R)-5,10-methylene-5,6,7,8-tetrahydrofolate + glycine + H2O = (6S)-5,6,7,8-tetrahydrofolate + L-serine. It functions in the pathway one-carbon metabolism; tetrahydrofolate interconversion. Its pathway is amino-acid biosynthesis; glycine biosynthesis; glycine from L-serine: step 1/1. Catalyzes the reversible interconversion of serine and glycine with tetrahydrofolate (THF) serving as the one-carbon carrier. This reaction serves as the major source of one-carbon groups required for the biosynthesis of purines, thymidylate, methionine, and other important biomolecules. Also exhibits THF-independent aldolase activity toward beta-hydroxyamino acids, producing glycine and aldehydes, via a retro-aldol mechanism. This Clostridium botulinum (strain 657 / Type Ba4) protein is Serine hydroxymethyltransferase.